Consider the following 341-residue polypeptide: Radial spoke head 14 homolog (341 aa).

ARM repeat units follow at residues 16–55, 57–96, 99–138, 139–178, 180–217, 219–258, 260–300, and 302–339; these read PTKA…DLMH, PEYV…IMAT, VGRV…LAQL, PKGA…LCLQ, DATE…AISI, LDGK…HATV, TEGK…MLAE, and PEGR…VIEW.

It belongs to the flagellar radial spoke RSP14 family. Component of the axonemal radial spoke complex 1 (RS1), at least composed of spoke head proteins RSPH1, RSPH3, RSPH9 and the cilia-specific component RSPH4A or sperm-specific component RSPH6A, spoke stalk proteins RSPH14, DNAJB13, DYDC1, ROPN1L and NME5, and the anchor protein IQUB.

It is found in the cytoplasm. It localises to the cytoskeleton. Its subcellular location is the flagellum axoneme. Functions as part of axonemal radial spoke complexes that play an important part in the motility of sperm and cilia. In Mus musculus (Mouse), this protein is Radial spoke head 14 homolog.